The primary structure comprises 257 residues: Phycoerythrobilin:ferredoxin oxidoreductase (257 aa).

This sequence belongs to the HY2 family.

It carries out the reaction (3Z)-phycoerythrobilin + oxidized 2[4Fe-4S]-[ferredoxin] = 15,16-dihydrobiliverdin + reduced 2[4Fe-4S]-[ferredoxin] + 2 H(+). Its function is as follows. Catalyzes the two-electron reduction of the C2 and C3(1) diene system of 15,16-dihydrobiliverdin. This Prochlorococcus marinus (strain MIT 9211) protein is Phycoerythrobilin:ferredoxin oxidoreductase.